Reading from the N-terminus, the 473-residue chain is Arginine biosynthesis bifunctional protein ArgJ, mitochondrial (473 aa).

Residues Thr-201, Lys-230, Thr-241, Glu-328, Asn-468, and Thr-473 each coordinate substrate. Catalysis depends on Thr-241, which acts as the Nucleophile.

Belongs to the ArgJ family. Heterodimer of an alpha and a beta chain. The alpha and beta chains are autoproteolytically processed from a single precursor protein within the mitochondrion.

It is found in the mitochondrion matrix. The catalysed reaction is N(2)-acetyl-L-ornithine + L-glutamate = N-acetyl-L-glutamate + L-ornithine. It carries out the reaction L-glutamate + acetyl-CoA = N-acetyl-L-glutamate + CoA + H(+). The protein operates within amino-acid biosynthesis; L-arginine biosynthesis; L-ornithine and N-acetyl-L-glutamate from L-glutamate and N(2)-acetyl-L-ornithine (cyclic): step 1/1. It functions in the pathway amino-acid biosynthesis; L-arginine biosynthesis; N(2)-acetyl-L-ornithine from L-glutamate: step 1/4. Functionally, catalyzes two activities which are involved in the cyclic version of arginine biosynthesis: the synthesis of acetylglutamate from glutamate and acetyl-CoA, and of ornithine by transacetylation between acetylornithine and glutamate. The protein is Arginine biosynthesis bifunctional protein ArgJ, mitochondrial of Ajellomyces capsulatus (strain G186AR / H82 / ATCC MYA-2454 / RMSCC 2432) (Darling's disease fungus).